The chain runs to 511 residues: GMP synthase [glutamine-hydrolyzing] (511 aa).

Positions 3–193 (KILILDFGGQ…VYSICDVAGD (191 aa)) constitute a Glutamine amidotransferase type-1 domain. The active-site Nucleophile is cysteine 80. Active-site residues include histidine 167 and glutamate 169. Residues 194–384 (WEPKNIKLEK…LDIPYQNVYR (191 aa)) enclose the GMPS ATP-PPase domain. 221 to 227 (SGGVDSL) contributes to the ATP binding site.

In terms of assembly, homodimer.

The catalysed reaction is XMP + L-glutamine + ATP + H2O = GMP + L-glutamate + AMP + diphosphate + 2 H(+). It functions in the pathway purine metabolism; GMP biosynthesis; GMP from XMP (L-Gln route): step 1/1. Functionally, catalyzes the synthesis of GMP from XMP. The sequence is that of GMP synthase [glutamine-hydrolyzing] from Malacoplasma penetrans (strain HF-2) (Mycoplasma penetrans).